Consider the following 263-residue polypeptide: Trans-2-decenoyl-[acyl-carrier-protein] isomerase (263 aa).

It belongs to the enoyl-CoA hydratase/isomerase family. As to quaternary structure, homotetramer.

It catalyses the reaction (2E)-decenoyl-[ACP] = (3Z)-decenoyl-[ACP]. Its pathway is lipid metabolism; fatty acid biosynthesis. In terms of biological role, catalyzes the isomerization of trans-2-decenoyl-ACP to cis-3-decenoyl-ACP. Required for survival at low pH. The sequence is that of Trans-2-decenoyl-[acyl-carrier-protein] isomerase (fabM) from Streptococcus mutans serotype c (strain ATCC 700610 / UA159).